Here is a 57-residue protein sequence, read N- to C-terminus: UPF0337 protein SCO0678 (57 aa).

2 stretches are compositionally biased toward basic and acidic residues: residues 1–22 (MAGN…KEAA) and 42–57 (GDAR…VFRH). A disordered region spans residues 1–57 (MAGNEKSRAKMEQAKGKAKEAAGRAVGNERMTAEGRAAQSKGDARQAKEKGKDVFRH).

The protein belongs to the UPF0337 (CsbD) family.

This chain is UPF0337 protein SCO0678, found in Streptomyces coelicolor (strain ATCC BAA-471 / A3(2) / M145).